The primary structure comprises 235 residues: Transmembrane emp24 domain-containing protein 9 (235 aa).

Residues 1–37 (MAAVRGVRVVGTSPGLLLGRGMRAFLLLLCLAARGGA) form the signal peptide. The Lumenal segment spans residues 38–202 (LYFHIGETEK…RQTSESTNQR (165 aa)). The 99-residue stretch at 47–145 (KKCFIEEIPD…MLRVHLDIQV (99 aa)) folds into the GOLD domain. The required for interaction with STX17 stretch occupies residues 121 to 160 (CLHSNSTKFSLFAGGMLRVHLDIQVGEHANDYAEIAAKDK). Asn-125 carries an N-linked (GlcNAc...) asparagine glycan. Residues 154–184 (EIAAKDKLSELQLRVRQLVEQVEQIQKEQNY) are a coiled coil. The residue at position 160 (Lys-160) is an N6-acetyllysine. The helical transmembrane segment at 203-222 (VLWWSILQTLILVAIGVWQM) threads the bilayer. Over 223–235 (RHLKSFFEAKKLV) the chain is Cytoplasmic. The COPII vesicle coat-binding signature appears at 228-229 (FF). The COPI vesicle coat-binding signature appears at 228-235 (FFEAKKLV).

Belongs to the EMP24/GP25L family. In terms of assembly, monomer and homodimer in endoplasmic reticulum. Predominantly monomeric and to lesser extent homodimeric in endoplasmic reticulum-Golgi intermediate compartment and cis-Golgi network. Probably oligomerizes with other members of the EMP24/GP25L family such as TMED2, TMED7 and TMED10. Interacts with TMED5. Interacts (via C-terminus) with COPG1; the interaction involves dimeric TMED9. Interacts with PTPN2 and SPAST. Interacts with STX17; the interaction is direct. In terms of processing, N-linked glycosylated containing high mannose.

Its subcellular location is the endoplasmic reticulum membrane. It localises to the golgi apparatus. It is found in the cis-Golgi network membrane. The protein localises to the endoplasmic reticulum-Golgi intermediate compartment membrane. The protein resides in the trans-Golgi network membrane. In terms of biological role, appears to be involved in vesicular protein trafficking, mainly in the early secretory pathway. In COPI vesicle-mediated retrograde transport involved in the coatomer recruitment to membranes of the early secretory pathway. Increases coatomer-dependent activity of ARFGAP2. Thought to play a crucial role in the specific retention of p24 complexes in cis-Golgi membranes; specifically contributes to the coupled localization of TMED2 and TMED10 in the cis-Golgi network. May be involved in organization of intracellular membranes, such as of the ER-Golgi intermediate compartment and the Golgi apparatus. Involved in ER localization of PTPN2. This is Transmembrane emp24 domain-containing protein 9 (Tmed9) from Rattus norvegicus (Rat).